Consider the following 142-residue polypeptide: Protein archease (142 aa).

The Ca(2+) site is built by Asp-12, Asp-141, and Leu-142.

This sequence belongs to the archease family.

In terms of biological role, activates the tRNA-splicing ligase complex by facilitating the enzymatic turnover of catalytic subunit RtcB. Acts by promoting the guanylylation of RtcB, a key intermediate step in tRNA ligation. Can also alter the NTP specificity of RtcB such that ATP, dGTP or ITP is used efficiently. In Thermococcus gammatolerans (strain DSM 15229 / JCM 11827 / EJ3), this protein is Protein archease.